The sequence spans 200 residues: Probable molybdenum cofactor guanylyltransferase (200 aa).

Residues 9–11, Lys21, Asp69, and Asp100 contribute to the GTP site; that span reads LAG. Asp100 contacts Mg(2+).

The protein belongs to the MobA family. Requires Mg(2+) as cofactor.

The protein localises to the cytoplasm. The catalysed reaction is Mo-molybdopterin + GTP + H(+) = Mo-molybdopterin guanine dinucleotide + diphosphate. Transfers a GMP moiety from GTP to Mo-molybdopterin (Mo-MPT) cofactor (Moco or molybdenum cofactor) to form Mo-molybdopterin guanine dinucleotide (Mo-MGD) cofactor. This is Probable molybdenum cofactor guanylyltransferase from Bacillus cereus (strain AH187).